The sequence spans 506 residues: Galactose/methyl galactoside import ATP-binding protein MglA (506 aa).

2 ABC transporter domains span residues 14–249 (LEMS…VGRS) and 264–506 (VILE…SLHL). 46–53 (GENGAGKS) is a binding site for ATP.

It belongs to the ABC transporter superfamily. Galactose/methyl galactoside importer (TC 3.A.1.2.3) family. In terms of assembly, the complex is composed of one ATP-binding protein (MglA), two transmembrane proteins (MglC) and a solute-binding protein (MglB).

It is found in the cell inner membrane. It carries out the reaction D-galactose(out) + ATP + H2O = D-galactose(in) + ADP + phosphate + H(+). The catalysed reaction is methyl beta-D-galactoside(out) + ATP + H2O = methyl beta-D-galactoside(in) + ADP + phosphate + H(+). Its function is as follows. Part of the ABC transporter complex MglABC involved in galactose/methyl galactoside import. Responsible for energy coupling to the transport system. The chain is Galactose/methyl galactoside import ATP-binding protein MglA from Shigella flexneri serotype 5b (strain 8401).